A 160-amino-acid polypeptide reads, in one-letter code: MRLVVIAIGRLKQGPERELADRYRGRFDDIGRKLGFRGFDVHEIPESRARDAKQRIREEAAAILALAPEGAVLVALDEKGKNIDSAAFADHLGRWRDESVTSTVFAVGGADGLSPELRRKARLSVAFGAATWPHQIVRVMLLEQIYRAATILAGHPYHRG.

Residues Leu76 and Gly108 each contribute to the S-adenosyl-L-methionine site.

This sequence belongs to the RNA methyltransferase RlmH family. As to quaternary structure, homodimer.

Its subcellular location is the cytoplasm. It catalyses the reaction pseudouridine(1915) in 23S rRNA + S-adenosyl-L-methionine = N(3)-methylpseudouridine(1915) in 23S rRNA + S-adenosyl-L-homocysteine + H(+). Functionally, specifically methylates the pseudouridine at position 1915 (m3Psi1915) in 23S rRNA. The sequence is that of Ribosomal RNA large subunit methyltransferase H from Nitrobacter hamburgensis (strain DSM 10229 / NCIMB 13809 / X14).